We begin with the raw amino-acid sequence, 845 residues long: uncharacterized protein (845 aa).

Disordered regions lie at residues 17–37 and 550–573; these read RRKQ…NDQP and AATE…NESL. Residues 622 to 707 are a coiled coil; the sequence is LSEQRFEREN…ELKKSNEHTR (86 aa).

This is an uncharacterized protein from Saccharum officinarum (Sugarcane).